We begin with the raw amino-acid sequence, 584 residues long: UvrABC system protein C (584 aa).

The GIY-YIG domain maps to 14-91; the sequence is HKPGCYLWKD…IKTHLPKYNI (78 aa). One can recognise a UVR domain in the interval 192 to 227; it reads DHILMILQTKEQHAVTKLDFENAQKYAEQQKALTSI.

Belongs to the UvrC family. Interacts with UvrB in an incision complex.

It localises to the cytoplasm. In terms of biological role, the UvrABC repair system catalyzes the recognition and processing of DNA lesions. UvrC both incises the 5' and 3' sides of the lesion. The N-terminal half is responsible for the 3' incision and the C-terminal half is responsible for the 5' incision. This chain is UvrABC system protein C, found in Ureaplasma parvum serovar 3 (strain ATCC 27815 / 27 / NCTC 11736).